A 239-amino-acid polypeptide reads, in one-letter code: Small ribosomal subunit protein uS3 (239 aa).

A KH type-2 domain is found at 39–107 (VRQVLRKKMS…SVHINVIEVR (69 aa)). The tract at residues 217 to 239 (KQDDISRGDRNADRSSRRSREVR) is disordered.

It belongs to the universal ribosomal protein uS3 family. Part of the 30S ribosomal subunit. Forms a tight complex with proteins S10 and S14.

Its function is as follows. Binds the lower part of the 30S subunit head. Binds mRNA in the 70S ribosome, positioning it for translation. The protein is Small ribosomal subunit protein uS3 of Xylella fastidiosa (strain 9a5c).